Reading from the N-terminus, the 401-residue chain is Nodal homolog 3-A (401 aa).

The first 18 residues, 1 to 18, serve as a signal peptide directing secretion; that stretch reads MAFLNLFFCLVFISPLMA. A propeptide spanning residues 19-274 is cleaved from the precursor; that stretch reads MPPVLQGRKS…KVNGFRRLRR (256 aa). 4 N-linked (GlcNAc...) asparagine glycosylation sites follow: Asn-168, Asn-337, Asn-341, and Asn-344. 2 disulfides stabilise this stretch: Cys-299-Cys-365 and Cys-328-Cys-396.

Belongs to the TGF-beta family. Monomer. The propeptide region interacts with bmp4 in a non-covalent manner. As to expression, expressed in the epithelial layer of the Spemann organizer during gastrulation.

The protein resides in the secreted. Its function is as follows. Exhibits mesoderm-dorsalizing activity and neural-inducing activity, but lacks mesoderm-inducing activity. Regulates the expression of specific mesodermal and neural genes. Induces convergent extension movements at the embryonic midline by activating the fgf signaling pathway to induce t/bra expression in the organizer region. Acts with wnt11 to induce Spemann organizer cells and induce axis formation. The unprocessed protein antagonizes bmp-signaling. The sequence is that of Nodal homolog 3-A (nodal3-a) from Xenopus laevis (African clawed frog).